Consider the following 401-residue polypeptide: ATP phosphoribosyltransferase regulatory subunit (401 aa).

It belongs to the class-II aminoacyl-tRNA synthetase family. HisZ subfamily. As to quaternary structure, heteromultimer composed of HisG and HisZ subunits.

It localises to the cytoplasm. The protein operates within amino-acid biosynthesis; L-histidine biosynthesis; L-histidine from 5-phospho-alpha-D-ribose 1-diphosphate: step 1/9. In terms of biological role, required for the first step of histidine biosynthesis. May allow the feedback regulation of ATP phosphoribosyltransferase activity by histidine. In Desulforamulus reducens (strain ATCC BAA-1160 / DSM 100696 / MI-1) (Desulfotomaculum reducens), this protein is ATP phosphoribosyltransferase regulatory subunit.